The sequence spans 369 residues: Anhydro-N-acetylmuramic acid kinase (369 aa).

ATP is bound at residue 12 to 19 (GTSLDGVD).

This sequence belongs to the anhydro-N-acetylmuramic acid kinase family.

The enzyme catalyses 1,6-anhydro-N-acetyl-beta-muramate + ATP + H2O = N-acetyl-D-muramate 6-phosphate + ADP + H(+). Its pathway is amino-sugar metabolism; 1,6-anhydro-N-acetylmuramate degradation. The protein operates within cell wall biogenesis; peptidoglycan recycling. Catalyzes the specific phosphorylation of 1,6-anhydro-N-acetylmuramic acid (anhMurNAc) with the simultaneous cleavage of the 1,6-anhydro ring, generating MurNAc-6-P. Is required for the utilization of anhMurNAc either imported from the medium or derived from its own cell wall murein, and thus plays a role in cell wall recycling. In Escherichia coli (strain SE11), this protein is Anhydro-N-acetylmuramic acid kinase.